We begin with the raw amino-acid sequence, 436 residues long: EPS I polysaccharide export inner membrane protein EpsE (436 aa).

12 consecutive transmembrane segments (helical) span residues 20 to 40 (VLGL…NIML), 49 to 69 (FGLF…LATG), 91 to 111 (LCAF…ALYL), 132 to 152 (MAAI…FLYA), 160 to 180 (ASVS…MGPI), 184 to 204 (VVAL…QLVI), 234 to 254 (VLTT…LAAM), 261 to 281 (LALF…PATL), 307 to 327 (ALLF…LLAG), 341 to 361 (AAAS…SVLL), 375 to 395 (FAMA…ALRL), and 396 to 416 (GYGA…LILF).

The protein to E.coli bicyclomycin resistance protein (BCR).

The protein localises to the cell inner membrane. In terms of biological role, probably involved in polymerization and/or export of exopolysaccharide EPS I which functions as a virulence factor. May play a role in export of EPS I or its intermediates across the membranes. This chain is EPS I polysaccharide export inner membrane protein EpsE (epsE), found in Ralstonia nicotianae (strain ATCC BAA-1114 / GMI1000) (Ralstonia solanacearum).